A 335-amino-acid polypeptide reads, in one-letter code: Proline racemase (335 aa).

The active-site Proton acceptor is the cysteine 91. Cysteine 256 (proton donor) is an active-site residue.

The protein belongs to the proline racemase family.

It catalyses the reaction L-proline = D-proline. With respect to regulation, inhibited by pyrrole-2-carboxylate in vitro. In terms of biological role, catalyzes the reversible interconversion of L- and D-proline. Likely functions as the proline racemase necessary for D-proline generation in order to discriminate it from the L-proline used for protein synthesis. This chain is Proline racemase, found in Acetoanaerobium sticklandii (strain ATCC 12662 / DSM 519 / JCM 1433 / CCUG 9281 / NCIMB 10654 / HF) (Clostridium sticklandii).